We begin with the raw amino-acid sequence, 231 residues long: Putative cobalt transport protein CbiM 1 (231 aa).

The next 6 helical transmembrane spans lie at 6-26 (GFLP…FLIY), 41-61 (VLPL…VDIP), 79-99 (FFGP…QALL), 107-127 (TLGA…WLVF), 136-156 (VPLG…TYLI), and 172-192 (LTAF…ISII).

The protein belongs to the CbiM family. As to quaternary structure, forms an energy-coupling factor (ECF) transporter complex composed of an ATP-binding protein (A component, CbiO), a transmembrane protein (T component, CbiQ) and 2 possible substrate-capture proteins (S components, CbiM and CbiN) of unknown stoichimetry.

It localises to the cell membrane. It functions in the pathway cofactor biosynthesis; adenosylcobalamin biosynthesis. Its function is as follows. Part of the energy-coupling factor (ECF) transporter complex CbiMNOQ involved in cobalt import. The polypeptide is Putative cobalt transport protein CbiM 1 (Methanocorpusculum labreanum (strain ATCC 43576 / DSM 4855 / Z)).